We begin with the raw amino-acid sequence, 180 residues long: ADP ribosylation factor 4 (180 aa).

Gly2 carries N-myristoyl glycine lipidation. Residues 24-31 (GLDAAGKT), 67-71 (DVGGQ), and 126-129 (NKQD) each bind GTP.

Belongs to the small GTPase superfamily. Arf family. As to expression, uniformly distributed throughout adults.

It is found in the golgi apparatus. Functionally, GTP-binding protein involved in protein trafficking; may modulate vesicle budding and uncoating within the Golgi apparatus. The chain is ADP ribosylation factor 4 from Drosophila melanogaster (Fruit fly).